We begin with the raw amino-acid sequence, 50 residues long: MDGEGHDINIWGARMSPSPAAAPVSATRGAPWSGCEGCPSRAADRRCVCH.

Residues 1-32 are disordered; sequence MDGEGHDINIWGARMSPSPAAAPVSATRGAPW. Residues 16-26 are compositionally biased toward low complexity; the sequence is SPSPAAAPVSA. Residue C47 is modified to Cysteine methyl ester. The S-farnesyl cysteine moiety is linked to residue C47. The propeptide at 48–50 is removed in mature form; the sequence is VCH.

The protein localises to the cell membrane. Activates B-regulated development. The chain is Mating-type pheromone BAP1(1) (BAP1(1)) from Schizophyllum commune (Split gill fungus).